Here is a 91-residue protein sequence, read N- to C-terminus: Apolipoprotein C-III (91 aa).

An N-terminal signal peptide occupies residues 1–20 (MQPRVLLAVTLLALLVSARA). At Met63 the chain carries Methionine sulfoxide. The segment at 68–91 (DSMKGYWTSLIGRLSGFLDSTPSS) is lipid-binding.

Belongs to the apolipoprotein C3 family.

Its subcellular location is the secreted. Component of triglyceride-rich very low density lipoproteins (VLDL) and high density lipoproteins (HDL) in plasma. Plays a multifaceted role in triglyceride homeostasis. Intracellularly, promotes hepatic very low density lipoprotein 1 (VLDL1) assembly and secretion; extracellularly, attenuates hydrolysis and clearance of triglyceride-rich lipoproteins (TRLs). Impairs the lipolysis of TRLs by inhibiting lipoprotein lipase and the hepatic uptake of TRLs by remnant receptors. Formed of several curved helices connected via semiflexible hinges, so that it can wrap tightly around the curved micelle surface and easily adapt to the different diameters of its natural binding partners. The chain is Apolipoprotein C-III (APOC3) from Cavia porcellus (Guinea pig).